The chain runs to 451 residues: Probable carboxypeptidase PMAA_093910 (451 aa).

The signal sequence occupies residues 1 to 19; the sequence is MKVSSLLPSVLLLVGATRA. Asparagine 149 carries N-linked (GlcNAc...) asparagine glycosylation. Aspartate 171 is a binding site for Zn(2+). Glutamate 203 acts as the Proton acceptor in catalysis. Glutamate 204 contacts Zn(2+). Residue asparagine 354 is glycosylated (N-linked (GlcNAc...) asparagine).

Belongs to the peptidase M20A family. It depends on Zn(2+) as a cofactor.

The protein localises to the secreted. The protein is Probable carboxypeptidase PMAA_093910 of Talaromyces marneffei (strain ATCC 18224 / CBS 334.59 / QM 7333) (Penicillium marneffei).